A 240-amino-acid polypeptide reads, in one-letter code: FMN-dependent NADH:quinone oxidoreductase 2 (240 aa).

Residues Ser-10 and 23–25 (SIS) contribute to the FMN site.

Belongs to the azoreductase type 1 family. As to quaternary structure, homodimer. Requires FMN as cofactor.

It carries out the reaction 2 a quinone + NADH + H(+) = 2 a 1,4-benzosemiquinone + NAD(+). The catalysed reaction is N,N-dimethyl-1,4-phenylenediamine + anthranilate + 2 NAD(+) = 2-(4-dimethylaminophenyl)diazenylbenzoate + 2 NADH + 2 H(+). In terms of biological role, quinone reductase that provides resistance to thiol-specific stress caused by electrophilic quinones. Its function is as follows. Also exhibits azoreductase activity. Catalyzes the reductive cleavage of the azo bond in aromatic azo compounds to the corresponding amines. The chain is FMN-dependent NADH:quinone oxidoreductase 2 from Idiomarina loihiensis (strain ATCC BAA-735 / DSM 15497 / L2-TR).